Here is a 200-residue protein sequence, read N- to C-terminus: 3-isopropylmalate dehydratase small subunit (200 aa).

It belongs to the LeuD family. LeuD type 1 subfamily. As to quaternary structure, heterodimer of LeuC and LeuD.

It carries out the reaction (2R,3S)-3-isopropylmalate = (2S)-2-isopropylmalate. The protein operates within amino-acid biosynthesis; L-leucine biosynthesis; L-leucine from 3-methyl-2-oxobutanoate: step 2/4. Functionally, catalyzes the isomerization between 2-isopropylmalate and 3-isopropylmalate, via the formation of 2-isopropylmaleate. This Serratia proteamaculans (strain 568) protein is 3-isopropylmalate dehydratase small subunit.